Consider the following 159-residue polypeptide: Cyanate hydratase (159 aa).

Catalysis depends on residues Arg-103, Glu-106, and Ser-129.

Belongs to the cyanase family.

It carries out the reaction cyanate + hydrogencarbonate + 3 H(+) = NH4(+) + 2 CO2. In terms of biological role, catalyzes the reaction of cyanate with bicarbonate to produce ammonia and carbon dioxide. The sequence is that of Cyanate hydratase from Blastomyces gilchristii (strain SLH14081) (Blastomyces dermatitidis).